The primary structure comprises 104 residues: Protein S100-A14 (104 aa).

One can recognise an EF-hand domain in the interval 27–61 (KNFHQYSVEGGKETLTPSELRDLVTQQLPHLMPSN).

Belongs to the S-100 family. Homodimer. Interacts with AGER.

The protein resides in the cytoplasm. In terms of biological role, modulates P53/TP53 protein levels, and thereby plays a role in the regulation of cell survival and apoptosis. Depending on the context, it can promote cell proliferation or apoptosis. Plays a role in the regulation of cell migration by modulating the levels of MMP2, a matrix protease that is under transcriptional control of P53/TP53. Does not bind calcium. This Bos taurus (Bovine) protein is Protein S100-A14 (S100A14).